The sequence spans 233 residues: Cytidylate kinase (233 aa).

Residue 15–23 (GPSGAGKSS) coordinates ATP. The segment covering 183–200 (QRDRQDEGREHAPLKQAE) has biased composition (basic and acidic residues). Residues 183-203 (QRDRQDEGREHAPLKQAEDAV) are disordered.

It belongs to the cytidylate kinase family. Type 1 subfamily.

It localises to the cytoplasm. The catalysed reaction is CMP + ATP = CDP + ADP. It catalyses the reaction dCMP + ATP = dCDP + ADP. This is Cytidylate kinase from Geobacter sp. (strain M21).